The primary structure comprises 414 residues: Nuclear localization sequence-binding protein (414 aa).

Disordered stretches follow at residues 1-172, 244-264, and 336-414; these read MAKT…TIFV, STSK…TPSE, and RPVR…KTFD. Positions 10 to 26 are enriched in basic and acidic residues; sequence NKKEVKASKQAKEEKAK. Low complexity-rich tracts occupy residues 27 to 44 and 54 to 73; these read AVSS…SSSE and ESSS…SSSD. Over residues 78-87 the composition is skewed to basic and acidic residues; sequence AETKKEESKD. A phosphoserine mark is found at serine 93, serine 95, serine 96, serine 97, serine 116, serine 127, serine 129, serine 131, and serine 143. Positions 96 to 105 are enriched in acidic residues; sequence SSDEEEEEEK. Basic and acidic residues predominate over residues 106 to 117; sequence EETKKEESKESS. Positions 118–128 are enriched in low complexity; the sequence is SSDSSSSSSSD. The segment covering 134–144 has biased composition (basic and acidic residues); the sequence is EESNDKKRKSE. 2 RRM domains span residues 168–246 and 267–345; these read ATIF…MSTS and DTLF…FSSP. Over residues 351–386 the composition is skewed to gly residues; that stretch reads GGRGGSRGFGGRGGGRGGNRGFGGRGGARGGRGGFR. Omega-N-methylarginine is present on arginine 353. The segment at 353–384 is RGG-box; it reads RGGSRGFGGRGGGRGGNRGFGGRGGARGGRGG. 3 positions are modified to asymmetric dimethylarginine; by HMT1; alternate: arginine 357, arginine 362, and arginine 366. Arginine 357, arginine 362, and arginine 366 each carry omega-N-methylarginine; by HMT1; alternate. The RNA-binding RGG-box stretch occupies residues 366–384; it reads RGGNRGFGGRGGARGGRGG. Arginine 370 is subject to Omega-N-methylarginine. An asymmetric dimethylarginine; by HMT1; alternate mark is found at arginine 375, arginine 379, and arginine 382. Arginine 375, arginine 379, and arginine 382 each carry omega-N-methylarginine; by HMT1; alternate. Arginine 386 carries the omega-N-methylarginine modification.

It belongs to the RRM GAR family. In terms of processing, methylated by HMT1, forming asymmetric dimethylarginines (DMA) within a domain referred to as an RGG box, made up of repeated Gly-Gly dipeptides interspersed with Arg and aromatic residues. Post-translationally, pyrophosphorylated by 5-diphosphoinositol pentakisphosphate (5-IP7). Serine pyrophosphorylation is achieved by Mg(2+)-dependent, but enzyme independent transfer of a beta-phosphate from a inositol pyrophosphate to a pre-phosphorylated serine residue.

It localises to the nucleus. Its subcellular location is the nucleolus. In terms of biological role, involved in pre-rRNA processing. Specifically binds nuclear localization sequences. Candidate for a receptor at the nucleus that may be involved in both RNA and protein transport. Binds telomeric sequences of the type (TG[1-3])n in vitro. In Saccharomyces cerevisiae (strain ATCC 204508 / S288c) (Baker's yeast), this protein is Nuclear localization sequence-binding protein.